Here is a 340-residue protein sequence, read N- to C-terminus: Entry-fusion complex protein OPG094 (340 aa).

The tract at residues 1 to 20 (MGGGVSVELPKRDPPPGVPT) is disordered. A lipid anchor (N-myristoyl glycine; by host) is attached at Gly-2. Residues 2 to 319 (GGGVSVELPK…VQHNIKHSFD (318 aa)) lie on the Virion surface side of the membrane. The helical; Signal-anchor for type II membrane protein transmembrane segment at 320-340 (LKLHLISLLSLLVIWILIVAI) threads the bilayer.

The protein belongs to the orthopoxvirus OPG086 family. As to quaternary structure, interacts with OPG143. Component of the entry fusion complex (EFC) composed of OPG053, OPG076, OPG086, OPG094, OPG095, OPG099, OPG107, OPG143, OPG104, OPG147 and OPG155. Except for OPG095 and OPG053, each of the EFC proteins is required for assembly or stability of the complex. In terms of processing, unglycosylated because produced in viral factories instead of the classic ER -Golgi route.

It is found in the virion membrane. Functionally, component of the entry fusion complex (EFC), which consists of 11 proteins. During cell infection, this complex mediates entry of the virion core into the host cytoplasm by a two-step mechanism consisting of lipid mixing of the viral and cellular membranes and subsequent pore formation. This Vaccinia virus (strain Copenhagen) (VACV) protein is Entry-fusion complex protein OPG094 (OPG094).